Consider the following 814-residue polypeptide: Flagellar radial spoke protein 1 (814 aa).

Arg-243 carries the post-translational modification Asymmetric dimethylarginine. The disordered stretch occupies residues Val-283–Pro-346. Residues Pro-303–Gly-329 are compositionally biased toward acidic residues. Arg-428 bears the Asymmetric dimethylarginine mark. 6 MORN repeats span residues Tyr-577–Gly-597, Tyr-600–Thr-622, Tyr-623–Val-645, Tyr-646–Trp-662, Gly-671–Glu-685, and Phe-691–Thr-707. The tract at residues Gly-739 to Pro-769 is disordered. Residues Pro-748 to Glu-758 show a composition bias toward acidic residues.

Post-translationally, asymmetrically dimethylated at Arg-243 and Arg-428 during flagellum resorption. Probably methylated by PRMT1.

It is found in the cytoplasm. Its subcellular location is the cytoskeleton. The protein resides in the flagellum axoneme. In terms of biological role, flagellar radial spokes contribute to the regulation of dynein arm activity and thus the pattern of flagellar bending. They consist of a thin stalk, which is attached to the a subfiber of the outer doublet microtubule, and a bulbous head, which is attached to the stalk and appears to interact with the projections from the central pair of microtubules. This chain is Flagellar radial spoke protein 1, found in Chlamydomonas reinhardtii (Chlamydomonas smithii).